A 155-amino-acid chain; its full sequence is MTTAIEYPSAMAKARFVRISATKARRVIDLVRGKSVEEALDILRWAPQSASEPVAKVIASAAANAQNNEGLDPTSLVVATIHADEGPTAKRIRPRAQGRAYRIRKRTSHITVIVESRPPKKAGKQGASASAARARRAQASKAATKKATDSKEGSE.

Positions His109–Glu155 are disordered. The segment covering Lys146–Glu155 has biased composition (basic and acidic residues).

This sequence belongs to the universal ribosomal protein uL22 family. Part of the 50S ribosomal subunit.

This protein binds specifically to 23S rRNA; its binding is stimulated by other ribosomal proteins, e.g. L4, L17, and L20. It is important during the early stages of 50S assembly. It makes multiple contacts with different domains of the 23S rRNA in the assembled 50S subunit and ribosome. Functionally, the globular domain of the protein is located near the polypeptide exit tunnel on the outside of the subunit, while an extended beta-hairpin is found that lines the wall of the exit tunnel in the center of the 70S ribosome. The chain is Large ribosomal subunit protein uL22 from Mycolicibacterium vanbaalenii (strain DSM 7251 / JCM 13017 / BCRC 16820 / KCTC 9966 / NRRL B-24157 / PYR-1) (Mycobacterium vanbaalenii).